The sequence spans 582 residues: Bifunctional lycopene cyclase/phytoene synthase (582 aa).

Positions 1-261 (MNQNGTRLCY…VVLGLVGCDY (261 aa)) are lycopene beta-cyclase. 6 helical membrane passes run 34–54 (CTYT…FFTA), 59–79 (KICI…SYLI), 99–121 (IPIE…YCIF), 142–162 (YVVA…LLLG), 170–190 (LILV…YPFL), and 242–262 (ALFF…CDYA). Residues 268–582 (YESLSQPASD…LLSALVYRLE (315 aa)) form a phytoene synthase region.

The protein in the N-terminal section; belongs to the lycopene beta-cyclase family. This sequence in the C-terminal section; belongs to the phytoene/squalene synthase family.

The protein localises to the membrane. The catalysed reaction is all-trans-lycopene = gamma-carotene. It carries out the reaction gamma-carotene = all-trans-beta-carotene. It catalyses the reaction 2 (2E,6E,10E)-geranylgeranyl diphosphate = 15-cis-phytoene + 2 diphosphate. It functions in the pathway carotenoid biosynthesis; beta-carotene biosynthesis. It participates in carotenoid biosynthesis; phytoene biosynthesis; all-trans-phytoene from geranylgeranyl diphosphate: step 1/1. Bifunctional enzyme that catalyzes the reactions from geranylgeranyl diphosphate to phytoene (phytoene synthase) and lycopene to beta-carotene via the intermediate gamma-carotene (lycopene cyclase). In Aspergillus niger (strain ATCC MYA-4892 / CBS 513.88 / FGSC A1513), this protein is Bifunctional lycopene cyclase/phytoene synthase.